Here is a 173-residue protein sequence, read N- to C-terminus: NADH-ubiquinone oxidoreductase chain 6 (173 aa).

5 helical membrane passes run 1-21 (MTYF…AVAS), 27-47 (YGVV…VNLG), 48-68 (VSFV…VVFV), 87-107 (VMGY…LGGF), and 139-159 (YGVG…FVVL).

It belongs to the complex I subunit 6 family.

It is found in the mitochondrion membrane. The enzyme catalyses a ubiquinone + NADH + 5 H(+)(in) = a ubiquinol + NAD(+) + 4 H(+)(out). Functionally, core subunit of the mitochondrial membrane respiratory chain NADH dehydrogenase (Complex I) that is believed to belong to the minimal assembly required for catalysis. Complex I functions in the transfer of electrons from NADH to the respiratory chain. The immediate electron acceptor for the enzyme is believed to be ubiquinone. In Coturnix japonica (Japanese quail), this protein is NADH-ubiquinone oxidoreductase chain 6 (MT-ND6).